The sequence spans 84 residues: MIWTAVIKGSALMTFVQGAMALVDKVFGEEILPHRIYSSGEAAQLLGMERLQVLEMVRAGTIKAKKVGDNYRILGSNLVEYMNR.

Belongs to the magnetosome MamR family.

The protein localises to the magnetosome. Its function is as follows. May play a role in controlling magnetite number and size. Coexpression of mamLQRBIEMO in a deletion of the 17 gene mamAB operon restores magnetosome vesicle formation but not magnetite biosynthesis. The polypeptide is Magnetosome protein MamR (Magnetospirillum gryphiswaldense (strain DSM 6361 / JCM 21280 / NBRC 15271 / MSR-1)).